The following is an 87-amino-acid chain: Type 3 secretion system needle filament protein (87 aa).

This sequence belongs to the SctF family. In terms of assembly, the core secretion machinery of the T3SS is composed of approximately 20 different proteins, including cytoplasmic components, a base, an export apparatus and a needle. This subunit polymerizes and forms the helical needle filament. In Y.enterocolitica E40, the needles are composed of 139 (plus-minus 19) YscF/SctF subunits.

The protein localises to the secreted. The protein resides in the cell surface. The secretion and/or polymerization may be controlled by the type III secretion system regulator YopR. Its function is as follows. Component of the type III secretion system (T3SS), also called injectisome, which is used to inject bacterial effector proteins into eukaryotic host cells. YscF/SctF forms the external needle filament that protrudes from the bacterial surface. The needle is not sufficient by itself for the formation of a pore allowing translocation of the Yop effectors across the host cell membrane. In Yersinia enterocolitica, this protein is Type 3 secretion system needle filament protein.